The sequence spans 364 residues: Hepatitis A virus cellular receptor 1 (364 aa).

The signal sequence occupies residues 1–20 (MHPQVVILSLILHLADSVAG). One can recognise an Ig-like V-type domain in the interval 21-121 (SVKVGGEAGP…WFNDMKITVS (101 aa)). At 21 to 295 (SVKVGGEAGP…SLLTANTTKG (275 aa)) the chain is on the extracellular side. 3 cysteine pairs are disulfide-bonded: Cys36–Cys105, Cys46–Cys57, and Cys52–Cys104. Asn65 carries an N-linked (GlcNAc...) asparagine glycan. Repeat copies occupy residues 138–143 (VPTVTT), 144–149 (VRTSTT), 150–155 (VPTTTT), 156–160 (VPMTT), 161–165 (VPTTT), 166–171 (VPTTMS), 172–177 (IPTTTT), 178–183 (VLTTMT), 184–189 (VSTTTS), 190–195 (VPTTTS), 196–201 (IPTTTS), and 202–207 (VPVTTT). The segment at 138-207 (VPTVTTVRTS…TTTSVPVTTT (70 aa)) is 12 X 6 AA approximate tandem repeats of V-P-T-T-T-T]. A disordered region spans residues 216–257 (PLPRQNHEPVATSPSSPQPAETHPTTLQGAIRREPTSSPLYS). Residues 227 to 243 (TSPSSPQPAETHPTTLQ) are compositionally biased toward polar residues. N-linked (GlcNAc...) asparagine glycosylation is found at Asn263, Asn277, and Asn291. Residues 296-316 (IYAGVCISVLVLLALLGVIIA) form a helical membrane-spanning segment. Over 317–364 (KKYFFKKEVQQLSVSFSSLQIKALQNAVEKEVQAEDNIYIENSLYATD) the chain is Cytoplasmic. Residues Lys338 and Lys346 each participate in a glycyl lysine isopeptide (Lys-Gly) (interchain with G-Cter in ubiquitin) cross-link.

It belongs to the immunoglobulin superfamily. TIM family. Interacts with STAM. Interacts with SELPLG. In terms of assembly, (Microbial infection) Interacts with hepatitis A virus capsid proteins. As to quaternary structure, (Microbial infection) Interacts with Ebolavirus envelope glycoprotein GP. (Microbial infection) Interacts with Zika virus envelope protein E. Post-translationally, ubiquitinated at two lysine residues Lys-338 and Lys-346 on its cytoplasmic domain. Ubiquitination promotes receptor endocytosis and target receptors for lysosomal degradation and termination of receptor signaling. In terms of processing, (Microbial infection) Ubiquitination is required for Dengue virus endocytosis. In terms of tissue distribution, widely expressed, with highest levels in kidney and testis. Expressed by activated CD4+ T-cells during the development of helper T-cells responses.

Its subcellular location is the cell membrane. Its function is as follows. Phosphatidylserine receptor that plays an important functional role in regulatory B-cells homeostasis including generation, expansion and suppressor functions. As P-selectin/SELPLG ligand, plays a specialized role in activated but not naive T-cell trafficking during inflammatory responses. Controls thereby T-cell accumulation in the inflamed central nervous system (CNS) and the induction of autoimmune disease. Also regulates expression of various anti-inflammatory cytokines and co-inhibitory ligands including IL10. Acts as a regulator of T-cell proliferation. May play a role in kidney injury and repair. Functionally, (Microbial infection) Acts as a receptor for Hepatitis A virus. In terms of biological role, (Microbial infection) Acts as a receptor for Ebolavirus and Marburg virus by binding exposed phosphatidyl-serine at the surface of virion membrane. Serves as a dual receptor for Ebolavirus by also interacting with envelope glycoprotein GP. (Microbial infection) Acts as a receptor for Dengue virus by binding exposed phosphatidyl-serine at the surface of virion membrane. TIM1 and Dengue virus are co-internalized during virus entry. Its function is as follows. (Microbial infection) Acts as a receptor for Zika virus by binding to envelope protein E. Functionally, (Microbial infection) Plays a positive role in Chikungunya virus cell entry. This Homo sapiens (Human) protein is Hepatitis A virus cellular receptor 1 (HAVCR1).